The primary structure comprises 554 residues: Glucose-6-phosphate isomerase (554 aa).

Catalysis depends on Glu-358, which acts as the Proton donor. Active-site residues include His-389 and Lys-515. Over residues 527 to 540 (ADNSPAPQSDSSTD) the composition is skewed to polar residues. Positions 527–554 (ADNSPAPQSDSSTDALVRRYRSERGRTS) are disordered. Over residues 542 to 554 (LVRRYRSERGRTS) the composition is skewed to basic and acidic residues.

Belongs to the GPI family.

It localises to the cytoplasm. The catalysed reaction is alpha-D-glucose 6-phosphate = beta-D-fructose 6-phosphate. The protein operates within carbohydrate biosynthesis; gluconeogenesis. It participates in carbohydrate degradation; glycolysis; D-glyceraldehyde 3-phosphate and glycerone phosphate from D-glucose: step 2/4. Catalyzes the reversible isomerization of glucose-6-phosphate to fructose-6-phosphate. This Mycobacterium avium (strain 104) protein is Glucose-6-phosphate isomerase.